We begin with the raw amino-acid sequence, 118 residues long: Large ribosomal subunit protein bL20 (118 aa).

This sequence belongs to the bacterial ribosomal protein bL20 family.

Binds directly to 23S ribosomal RNA and is necessary for the in vitro assembly process of the 50S ribosomal subunit. It is not involved in the protein synthesizing functions of that subunit. In Lactobacillus delbrueckii subsp. bulgaricus (strain ATCC BAA-365 / Lb-18), this protein is Large ribosomal subunit protein bL20.